The chain runs to 327 residues: Expansin-B7 (327 aa).

A signal peptide spans 1–30; sequence MAGRSRRRSFWSVGVAAALLCLLAAHGCSA. The disordered stretch occupies residues 30–88; it reads AKHHKPKPTPGGISGNASSSSSNSSTPSIPPPVAPTPTAPTPPIPSPGTGSSNGSSGGG. Residues 44–56 show a composition bias toward low complexity; sequence GNASSSSSNSSTP. 2 N-linked (GlcNAc...) asparagine glycosylation sites follow: asparagine 45 and asparagine 52. Positions 57 to 75 are enriched in pro residues; it reads SIPPPVAPTPTAPTPPIPS. A glycan (N-linked (GlcNAc...) asparagine) is linked at asparagine 82. The Expansin-like EG45 domain occupies 112–218; that stretch reads GGACGFKNVN…RRVPCQYPGL (107 aa). Cystine bridges form between cysteine 115-cysteine 143, cysteine 146-cysteine 213, and cysteine 151-cysteine 157. The 92-residue stretch at 231 to 322 folds into the Expansin-like CBD domain; sequence VYMAILVEYE…DWQPNTVYSS (92 aa). Asparagine 298 carries N-linked (GlcNAc...) asparagine glycosylation.

This sequence belongs to the expansin family. Expansin B subfamily.

It is found in the secreted. Its subcellular location is the cell wall. It localises to the membrane. In terms of biological role, may cause loosening and extension of plant cell walls by disrupting non-covalent bonding between cellulose microfibrils and matrix glucans. No enzymatic activity has been found. May be required for rapid internodal elongation in deepwater rice during submergence. In Oryza sativa subsp. japonica (Rice), this protein is Expansin-B7 (EXPB7).